Reading from the N-terminus, the 269-residue chain is MSRYQLCFEALAQKQQGAFVPFVTLGDPDAELSLKIIDALIEGGADALEIGIPFSDPLADGPTIQGANLRALNANVTPTLCFELLSQIRQKHPTIPIGLLVYANLVFSNGVDNFYHKCQQAGVDSVLIGDVPLREAKQFREAALSANIAPIFICPPNADDELLQELATSAEGYTYLLSRAGVTGTDKRAEQSLTHLTSKLKAYNAPPALQGFGISEPQQVSQAISNGAFGAISGSAVVQIIENNLHQPDVMLKMLTQFVQQMKAATISV.

Catalysis depends on proton acceptor residues glutamate 49 and aspartate 60.

Belongs to the TrpA family. In terms of assembly, tetramer of two alpha and two beta chains.

It catalyses the reaction (1S,2R)-1-C-(indol-3-yl)glycerol 3-phosphate + L-serine = D-glyceraldehyde 3-phosphate + L-tryptophan + H2O. Its pathway is amino-acid biosynthesis; L-tryptophan biosynthesis; L-tryptophan from chorismate: step 5/5. In terms of biological role, the alpha subunit is responsible for the aldol cleavage of indoleglycerol phosphate to indole and glyceraldehyde 3-phosphate. This is Tryptophan synthase alpha chain from Proteus mirabilis (strain HI4320).